The sequence spans 591 residues: BRCA1-associated protein (591 aa).

At serine 52 the chain carries Phosphoserine. Basic and acidic residues predominate over residues 82-93; the sequence is DEVRDTVEEKKP. The tract at residues 82-124 is disordered; sequence DEVRDTVEEKKPSAAPVSAQRSREQSESVNTAPESPSKQLPDQ. The segment covering 108–124 has biased composition (polar residues); that stretch reads ESVNTAPESPSKQLPDQ. Phosphoserine occurs at positions 116 and 118. Residues 263–303 form an RING-type zinc finger; the sequence is CTVCLERMDESVNGILTTLCNHSFHSQCLQRWDDTTCPVCR. The segment at 300–392 adopts a UBP-type; degenerate zinc-finger fold; the sequence is PVCRYCQTPE…GKIVQYECEG (93 aa). Residues cysteine 316, cysteine 319, cysteine 328, cysteine 331, cysteine 336, histidine 343, histidine 347, and histidine 353 each coordinate Zn(2+). The stretch at 430-536 forms a coiled coil; sequence EKDTAEEINN…EIQEQLRDVM (107 aa). Residues 563–591 are disordered; that stretch reads IAMASAPNPPSSGAGGKLQSRKGRSKRGK. Residues 581-591 show a composition bias toward basic residues; that stretch reads QSRKGRSKRGK.

In terms of assembly, interacts with the nuclear localization signal of BRCA1 and with the N-terminal of KSR1. The C-terminal portion of BRCA1 interacts with DDB1. Isoform 2 is highly expressed in testis, lower levels in brain, heart, lung, stomach, colon, uterus, liver and kidney. Isoform 1 is only expressed in the testis. Isoform 2 is predominant over isoform 1 in both fetal and adult testis.

It localises to the cytoplasm. It catalyses the reaction S-ubiquitinyl-[E2 ubiquitin-conjugating enzyme]-L-cysteine + [acceptor protein]-L-lysine = [E2 ubiquitin-conjugating enzyme]-L-cysteine + N(6)-ubiquitinyl-[acceptor protein]-L-lysine.. It participates in protein modification; protein ubiquitination. In terms of biological role, negatively regulates MAP kinase activation by limiting the formation of Raf/MEK complexes probably by inactivation of the KSR1 scaffold protein. Also acts as a Ras responsive E3 ubiquitin ligase that, on activation of Ras, is modified by auto-polyubiquitination resulting in the release of inhibition of Raf/MEK complex formation. May also act as a cytoplasmic retention protein with a role in regulating nuclear transport. This is BRCA1-associated protein from Mus musculus (Mouse).